The following is a 123-amino-acid chain: Small ribosomal subunit protein uS12c (123 aa).

It belongs to the universal ribosomal protein uS12 family. Part of the 30S ribosomal subunit.

The protein localises to the plastid. Its subcellular location is the chloroplast. Its function is as follows. With S4 and S5 plays an important role in translational accuracy. Located at the interface of the 30S and 50S subunits. In Chaetosphaeridium globosum (Charophycean green alga), this protein is Small ribosomal subunit protein uS12c (rps12).